The following is a 686-amino-acid chain: MKRINVDLHLLHFPKFRKFQSRKVSSSLPKLELDQKSPQETVFLLGQVLDTYPDIRTLRTVHSRIILEDLRCNSSLGVKLMRAYASLKDVASARKVFDEIPERNVIIINVMIRSYVNNGFYGEGVKVFGTMCGCNVRPDHYTFPCVLKACSCSGTIVIGRKIHGSATKVGLSSTLFVGNGLVSMYGKCGFLSEARLVLDEMSRRDVVSWNSLVVGYAQNQRFDDALEVCREMESVKISHDAGTMASLLPAVSNTTTENVMYVKDMFFKMGKKSLVSWNVMIGVYMKNAMPVEAVELYSRMEADGFEPDAVSITSVLPACGDTSALSLGKKIHGYIERKKLIPNLLLENALIDMYAKCGCLEKARDVFENMKSRDVVSWTAMISAYGFSGRGCDAVALFSKLQDSGLVPDSIAFVTTLAACSHAGLLEEGRSCFKLMTDHYKITPRLEHLACMVDLLGRAGKVKEAYRFIQDMSMEPNERVWGALLGACRVHSDTDIGLLAADKLFQLAPEQSGYYVLLSNIYAKAGRWEEVTNIRNIMKSKGLKKNPGASNVEVNRIIHTFLVGDRSHPQSDEIYRELDVLVKKMKELGYVPDSESALHDVEEEDKETHLAVHSEKLAIVFALMNTKEEEEDSNNTIRITKNLRICGDCHVAAKLISQITSREIIIRDTNRFHVFRFGVCSCGDYW.

12 PPR repeats span residues 73-103 (NSSL…IPER), 104-138 (NVII…NVRP), 139-173 (DHYT…GLSS), 174-204 (TLFV…MSRR), 205-239 (DVVS…KISH), 240-272 (DAGT…MGKK), 273-307 (SLVS…GFEP), 308-342 (DAVS…KLIP), 343-373 (NLLL…MKSR), 374-408 (DVVS…GLVP), 409-439 (DSIA…MTDH), and 445-475 (RLEH…MSME). The tract at residues 480 to 555 (VWGALLGACR…NPGASNVEVN (76 aa)) is type E motif. Residues 556-586 (RIIHTFLVGDRSHPQSDEIYRELDVLVKKMK) form a type E(+) motif region. Residues 587 to 686 (ELGYVPDSES…FGVCSCGDYW (100 aa)) are type DYW motif.

It belongs to the PPR family. PCMP-H subfamily.

This chain is Putative pentatricopeptide repeat-containing protein At3g49142 (PCMP-H77), found in Arabidopsis thaliana (Mouse-ear cress).